The chain runs to 693 residues: Elongation factor G (693 aa).

The region spanning 8-282 (EKTRNIGIMA…AVLDYLPSPL (275 aa)) is the tr-type G domain. Residues 17-24 (AHVDAGKT), 81-85 (DTPGH), and 135-138 (NKMD) contribute to the GTP site.

Belongs to the TRAFAC class translation factor GTPase superfamily. Classic translation factor GTPase family. EF-G/EF-2 subfamily.

It is found in the cytoplasm. Catalyzes the GTP-dependent ribosomal translocation step during translation elongation. During this step, the ribosome changes from the pre-translocational (PRE) to the post-translocational (POST) state as the newly formed A-site-bound peptidyl-tRNA and P-site-bound deacylated tRNA move to the P and E sites, respectively. Catalyzes the coordinated movement of the two tRNA molecules, the mRNA and conformational changes in the ribosome. In Enterococcus faecalis (strain ATCC 700802 / V583), this protein is Elongation factor G.